The sequence spans 131 residues: Small ribosomal subunit protein uS8 (131 aa).

Belongs to the universal ribosomal protein uS8 family. In terms of assembly, part of the 30S ribosomal subunit. Contacts proteins S5 and S12.

One of the primary rRNA binding proteins, it binds directly to 16S rRNA central domain where it helps coordinate assembly of the platform of the 30S subunit. The polypeptide is Small ribosomal subunit protein uS8 (Desulforudis audaxviator (strain MP104C)).